A 397-amino-acid polypeptide reads, in one-letter code: S-adenosylmethionine synthase (397 aa).

An ATP-binding site is contributed by His-16. Asp-18 contributes to the Mg(2+) binding site. Glu-44 serves as a coordination point for K(+). Positions 57 and 100 each coordinate L-methionine. The segment at Gln-100–Glu-110 is flexible loop. Residues Asp-175–Lys-177, Arg-242–Phe-243, Asp-251, Arg-257–Lys-258, Ala-274, and Lys-278 each bind ATP. Asp-251 provides a ligand contact to L-methionine. Lys-282 provides a ligand contact to L-methionine.

The protein belongs to the AdoMet synthase family. In terms of assembly, homotetramer; dimer of dimers. The cofactor is Mg(2+). K(+) is required as a cofactor.

It localises to the cytoplasm. The enzyme catalyses L-methionine + ATP + H2O = S-adenosyl-L-methionine + phosphate + diphosphate. The protein operates within amino-acid biosynthesis; S-adenosyl-L-methionine biosynthesis; S-adenosyl-L-methionine from L-methionine: step 1/1. Functionally, catalyzes the formation of S-adenosylmethionine (AdoMet) from methionine and ATP. The overall synthetic reaction is composed of two sequential steps, AdoMet formation and the subsequent tripolyphosphate hydrolysis which occurs prior to release of AdoMet from the enzyme. This is S-adenosylmethionine synthase from Streptococcus thermophilus (strain CNRZ 1066).